A 694-amino-acid chain; its full sequence is Acetolactate synthase catalytic subunit, mitochondrial (694 aa).

The N-terminal 42 residues, 1–42, are a transit peptide targeting the mitochondrion; it reads MLRSRQATNALRAVGQTRPLRSQTAVAFTQSLNKVPSNRRSE. Residues 45-58 are compositionally biased toward low complexity; that stretch reads VATASSTASGAFNS. Positions 45–69 are disordered; sequence VATASSTASGAFNSQVRPTPSPTFN. A compositionally biased stretch (polar residues) spans 59 to 69; it reads QVRPTPSPTFN. Glu140 lines the thiamine diphosphate pocket. FAD-binding positions include Arg242, 358–379, and 410–429; these read HGSA…LGGR and EIMP…IVGD. Positions 505–585 are thiamine pyrophosphate binding; the sequence is QHQMWTAQHF…VKVIVLNNEE (81 aa). Residues Asp556, Asn583, and Glu585 each coordinate Mg(2+).

Belongs to the TPP enzyme family. As to quaternary structure, homodimer. Requires Mg(2+) as cofactor. Thiamine diphosphate is required as a cofactor.

It is found in the mitochondrion. The enzyme catalyses 2 pyruvate + H(+) = (2S)-2-acetolactate + CO2. It catalyses the reaction 2-oxobutanoate + pyruvate + H(+) = (S)-2-ethyl-2-hydroxy-3-oxobutanoate + CO2. Its pathway is amino-acid biosynthesis; L-isoleucine biosynthesis; L-isoleucine from 2-oxobutanoate: step 1/4. It functions in the pathway amino-acid biosynthesis; L-valine biosynthesis; L-valine from pyruvate: step 1/4. In terms of biological role, acetolactate synthase catalytic subunit, mitochondrial; part of the gene cluster that mediates the biosynthesis of chlorflavonin, a fungal flavonoid with acetolactate synthase inhibitory activity. Is not direcly involved in chlorflavonin biosynthesis but acts as a self-resistant protein that effectively confers chlorflavonin resistance to the native host. As a catalytic subunit of mitochondrial acetolactate synthase, catalyzes the first of a series of common steps in the biosynthesis of the branched-chain amino acids. Catalyzes the irreversible decarboxylation of pyruvate to a bound hydroxyethyl group that then condenses with either a second pyruvate molecule to form 2-acetolactate (AL) or with 2-ketobutyrate to form 2-aceto-2-hydroxybutyrate (AHB). The first product is the precursor for valine and leucine biosynthesis, while the second leads to isoleucine. This Aspergillus candidus protein is Acetolactate synthase catalytic subunit, mitochondrial.